The primary structure comprises 155 residues: Small ribosomal subunit protein uS7c (155 aa).

It belongs to the universal ribosomal protein uS7 family. In terms of assembly, part of the 30S ribosomal subunit.

The protein resides in the plastid. It is found in the chloroplast. In terms of biological role, one of the primary rRNA binding proteins, it binds directly to 16S rRNA where it nucleates assembly of the head domain of the 30S subunit. The sequence is that of Small ribosomal subunit protein uS7c (rps7) from Lilium superbum (Turk's cap lily).